A 158-amino-acid polypeptide reads, in one-letter code: Deoxyuridine 5'-triphosphate nucleotidohydrolase (158 aa).

Residues 75–77 (RSG), Asn88, 92–94 (TVD), and Lys102 contribute to the substrate site.

The protein belongs to the dUTPase family. The cofactor is Mg(2+).

The enzyme catalyses dUTP + H2O = dUMP + diphosphate + H(+). The protein operates within pyrimidine metabolism; dUMP biosynthesis; dUMP from dCTP (dUTP route): step 2/2. Functionally, this enzyme is involved in nucleotide metabolism: it produces dUMP, the immediate precursor of thymidine nucleotides and it decreases the intracellular concentration of dUTP so that uracil cannot be incorporated into DNA. The sequence is that of Deoxyuridine 5'-triphosphate nucleotidohydrolase from Bifidobacterium longum subsp. infantis (strain ATCC 15697 / DSM 20088 / JCM 1222 / NCTC 11817 / S12).